A 440-amino-acid chain; its full sequence is Transposon Ty1-PR2 Gag polyprotein (440 aa).

3 stretches are compositionally biased toward polar residues: residues Met1–Pro10, Thr48–Ser60, and Gln127–Phe152. Disordered stretches follow at residues Met1–Gln93, Pro126–Pro173, and Gly352–Tyr440. Low complexity predominate over residues Thr153–Thr165. The RNA-binding stretch occupies residues Asn299 to His401. Over residues Asn402–Ser418 the composition is skewed to low complexity. Ser416 is subject to Phosphoserine. Polar residues predominate over residues Lys419–Asn428. Basic and acidic residues predominate over residues Asn429–Tyr440.

As to quaternary structure, homotrimer.

The protein resides in the cytoplasm. Functionally, capsid protein (CA) is the structural component of the virus-like particle (VLP), forming the shell that encapsulates the retrotransposons dimeric RNA genome. The particles are assembled from trimer-clustered units and there are holes in the capsid shells that allow for the diffusion of macromolecules. CA also has nucleocapsid-like chaperone activity, promoting primer tRNA(i)-Met annealing to the multipartite primer-binding site (PBS), dimerization of Ty1 RNA and initiation of reverse transcription. The protein is Transposon Ty1-PR2 Gag polyprotein (TY1A-PR2) of Saccharomyces cerevisiae (strain ATCC 204508 / S288c) (Baker's yeast).